Reading from the N-terminus, the 889-residue chain is A disintegrin and metalloproteinase with thrombospondin motifs 8 (889 aa).

An N-terminal signal peptide occupies residues 1–26 (MLPAPAAPRWPPLLLLLLLLLPLARG). Residues 27-213 (APARPAAGGQ…PLGATSRTKR (187 aa)) constitute a propeptide that is removed on maturation. The interval 138–210 (QGAGGSLAQP…PPPPLGATSR (73 aa)) is disordered. Positions 173–183 (EGQRQERGDHQ) are enriched in basic and acidic residues. The segment covering 184–197 (EDSEEESQEEEAEG) has biased composition (acidic residues). The 211-residue stretch at 219–429 (RFVETLLVAD…GHGDCLLDAP (211 aa)) folds into the Peptidase M12B domain. 11 cysteine pairs are disulfide-bonded: C294–C347, C323–C329, C341–C424, C379–C408, C452–C477, C463–C486, C472–C507, C501–C512, C538–C575, C542–C580, and C553–C565. N344 is a glycosylation site (N-linked (GlcNAc...) asparagine). H363 provides a ligand contact to Zn(2+). E364 is an active-site residue. Zn(2+) contacts are provided by H367 and H373. N-linked (GlcNAc...) asparagine glycosylation is found at N400, N465, and N490. The 88-residue stretch at 438 to 525 (GLPGRMALYQ…EEVERPKPVA (88 aa)) folds into the Disintegrin domain. The TSP type-1 1 domain occupies 526 to 581 (DGGWAPWGPWGECSRTCGGGVQFSHRECKDPEPQNGGRYCLGRRAKYQSCHTEECP). N599 is a glycosylation site (N-linked (GlcNAc...) asparagine). The tract at residues 690 to 831 (RKVSGSLTPT…RATTNIIQPL (142 aa)) is spacer. One can recognise a TSP type-1 2 domain in the interval 833–888 (HAQWVLGDWSECSSTCGAGWQRRTVECRDPSGQASATCNKALKPEDAKPCESQLCP).

Zn(2+) is required as a cofactor. The precursor is cleaved by a furin endopeptidase. Post-translationally, glycosylated. Can be O-fucosylated by POFUT2 on a serine or a threonine residue found within the consensus sequence C1-X(2)-(S/T)-C2-G of the TSP type-1 repeat domains where C1 and C2 are the first and second cysteine residue of the repeat, respectively. Fucosylated repeats can then be further glycosylated by the addition of a beta-1,3-glucose residue by the glucosyltransferase, B3GALTL. Fucosylation mediates the efficient secretion of ADAMTS family members. Can also be C-glycosylated with one or two mannose molecules on tryptophan residues within the consensus sequence W-X-X-W of the TPRs, and N-glycosylated. These other glycosylations can also facilitate secretion. Highly expressed in adult and fetal lung, lower expression in brain, placenta, heart, stomach and fetal brain and kidney.

The protein resides in the secreted. The protein localises to the extracellular space. Its subcellular location is the extracellular matrix. Has anti-angiogenic properties. The polypeptide is A disintegrin and metalloproteinase with thrombospondin motifs 8 (ADAMTS8) (Homo sapiens (Human)).